A 429-amino-acid chain; its full sequence is MFDPTERGTAIDIEVNDRLRKTLALILAGGRGSRLMDLTDWHAKPAIPFAGKFRIVDFTLSNCINSGIRRIGVLTQYKAHSLLQHIQRGWGFLRGEFNEFIELLPAQQRTQGENWYKGTADAVFQNLDIIHAHRPEHVLVLAGDHVYKMHYGKMLAHHLAAGADVTVACIEVPLETAKGFGVMAVDEDDRVIRFDEKPDHPQPMPGHPDQALASMGIYIFNAQLLFDLLQKDSINPETSHDFGKDIIPSLVKSHRVIAHHFQDSCVMHEGAREHYWRDVGTIDAYWEANIDLTTVTPALNLYDESWPIWTDQPQSPPAKFVFDSEHRRGMAVDSLVAGGCIVSGAVVRRSMLFSNVRVNSFCVVEDAVILPNVDIGRHARLKRCIVDQGVVVPPGLVVGEDPVLDAKRFHRTEKGITLVTAEKLKLLGA.

Alpha-D-glucose 1-phosphate is bound by residues Tyr116, Gly181, 196 to 197 (EK), and Ser214.

This sequence belongs to the bacterial/plant glucose-1-phosphate adenylyltransferase family. In terms of assembly, homotetramer.

It catalyses the reaction alpha-D-glucose 1-phosphate + ATP + H(+) = ADP-alpha-D-glucose + diphosphate. Its pathway is glycan biosynthesis; glycogen biosynthesis. Functionally, involved in the biosynthesis of ADP-glucose, a building block required for the elongation reactions to produce glycogen. Catalyzes the reaction between ATP and alpha-D-glucose 1-phosphate (G1P) to produce pyrophosphate and ADP-Glc. In Paramagnetospirillum magneticum (strain ATCC 700264 / AMB-1) (Magnetospirillum magneticum), this protein is Glucose-1-phosphate adenylyltransferase.